The chain runs to 99 residues: Large ribosomal subunit protein uL23 (99 aa).

It belongs to the universal ribosomal protein uL23 family. As to quaternary structure, part of the 50S ribosomal subunit. Contacts protein L29, and trigger factor when it is bound to the ribosome.

Functionally, one of the early assembly proteins it binds 23S rRNA. One of the proteins that surrounds the polypeptide exit tunnel on the outside of the ribosome. Forms the main docking site for trigger factor binding to the ribosome. The polypeptide is Large ribosomal subunit protein uL23 (Synechococcus sp. (strain JA-2-3B'a(2-13)) (Cyanobacteria bacterium Yellowstone B-Prime)).